A 139-amino-acid chain; its full sequence is Putative nickel-responsive regulator (139 aa).

4 residues coordinate Ni(2+): His-79, His-90, His-92, and Cys-98.

The protein belongs to the transcriptional regulatory CopG/NikR family. It depends on Ni(2+) as a cofactor.

In terms of biological role, transcriptional regulator. This Lawsonia intracellularis (strain PHE/MN1-00) protein is Putative nickel-responsive regulator.